The sequence spans 93 residues: Phosphoribosyl-ATP pyrophosphatase (93 aa).

This sequence belongs to the PRA-PH family.

It localises to the cytoplasm. The catalysed reaction is 1-(5-phospho-beta-D-ribosyl)-ATP + H2O = 1-(5-phospho-beta-D-ribosyl)-5'-AMP + diphosphate + H(+). The protein operates within amino-acid biosynthesis; L-histidine biosynthesis; L-histidine from 5-phospho-alpha-D-ribose 1-diphosphate: step 2/9. This Mycolicibacterium paratuberculosis (strain ATCC BAA-968 / K-10) (Mycobacterium paratuberculosis) protein is Phosphoribosyl-ATP pyrophosphatase.